The chain runs to 153 residues: Penitrem biosynthesis cluster 1 protein I (153 aa).

The protein operates within secondary metabolite biosynthesis. Part of the gene cluster that mediates the biosynthesis of the indole diterpenes penitrems. The geranylgeranyl diphosphate (GGPP) synthase ptmG catalyzes the first step in penitrem biosynthesis via conversion of farnesyl pyrophosphate and isopentyl pyrophosphate into geranylgeranyl pyrophosphate (GGPP). Condensation of indole-3-glycerol phosphate with GGPP by the prenyl transferase ptmC then forms 3-geranylgeranylindole (3-GGI). Epoxidation by the FAD-dependent monooxygenase ptmM leads to a epoxidized-GGI that is substrate of the terpene cyclase ptmB for cyclization to yield paspaline. Paspaline is subsequently converted to 13-desoxypaxilline by the cytochrome P450 monooxygenase ptmP, the latter being then converted to paxilline by the cytochrome P450 monooxygenase ptmQ. Paxilline is converted to beta-paxitriol via C-10 ketoreduction by the short-chain dehydrogenase ptmH which can be monoprenylated at the C-20 by the indole diterpene prenyltransferase ptmD. A two-step elimination (acetylation and elimination) process performed by the O-acetyltransferase ptmV and ptmI leads to the production of the prenylated form of penijanthine. The FAD-linked oxidoreductase ptmO then converts the prenylated form of penijanthine into PC-M5 which is in turn transformed into PC-M4 by the aromatic dimethylallyltransferase ptmE. Five sequential oxidative transformations performed by the cytochrome P450 monooxygenases ptmK, ptmU, ptmL, ptmN and ptmJ yield the various penitrem compounds. PtmK, ptmU and ptmM are involved in the formation of the key bicyclic ring of penitrem C via the formation of the intermediates secopenitrem D and penitrem D. PtmL catalyzes the epoxidation of penitrem D and C to yield penitrem B and F, respectively. PtmJ catalyzes the last benzylic hydroxylation to convert penitrem B to prenitrem E and penitrem F to penitrem A. The polypeptide is Penitrem biosynthesis cluster 1 protein I (Penicillium ochrochloron).